The sequence spans 406 residues: Magnesium transporter NIPA4 (406 aa).

The Extracellular segment spans residues 1-57 (MELRVANANGSCENGSIVSLYCSSQEVLCQIVRGISPEEPYNATLITWQERVRKKYG). N-linked (GlcNAc...) asparagine glycans are attached at residues Asn-9, Asn-14, and Asn-42. A helical transmembrane segment spans residues 58 to 78 (FYIGVGLAFLSCFLIGTSVIL). Topologically, residues 79–126 (KKKGLIRLVATGATRAVNGGYGYLKDPMWWAGMATMSAGEVANFGAYA) are cytoplasmic. Residues 127-147 (FAPATVVTPLGALSVLISAIF) traverse the membrane as a helical segment. The Extracellular segment spans residues 148–155 (SSYCLGES). Residues 156–176 (LNLLGKLGCVICMAGSTVMVI) traverse the membrane as a helical segment. Residues 177–197 (HAPKEEKVTTVAEMASKMKDT) lie on the Cytoplasmic side of the membrane. A helical transmembrane segment spans residues 198 to 218 (GFIVFAVLLVVSCLILIFIVA). At 219 to 225 (PRYGQRN) the chain is on the extracellular side. Residues 226-246 (ILIYIIICSVIGSFSVTAVKG) traverse the membrane as a helical segment. Residues 247–263 (LGVTIRNFFQGLPVVRH) are Cytoplasmic-facing. The helical transmembrane segment at 264–284 (PLPYILSLILGLSIIIQVNFL) threads the bilayer. The Extracellular portion of the chain corresponds to 285 to 295 (NRALDIFNTSL). An N-linked (GlcNAc...) asparagine glycan is attached at Asn-292. Residues 296-316 (VFPIYYVFFTTVVVASSIVLF) traverse the membrane as a helical segment. At 317–326 (KEWYTMSAVD) the chain is on the cytoplasmic side. Residues 327–347 (IVGTLSGFVTIILGVFMLHAF) traverse the membrane as a helical segment. Topologically, residues 348-406 (KDLDINQISLPHTHKNPTPAPAPEPTVIKLEDKNVLVDNIELASTPSPQQKPKVFMTDS) are extracellular.

It belongs to the NIPA family.

The protein resides in the cell membrane. The catalysed reaction is Mg(2+)(in) = Mg(2+)(out). Functionally, acts as a Mg(2+) transporter. Can also transport other divalent cations such as Ba(2+), Sr(2+) and Fe(2+) but to a much less extent than Mg(2+). May be a receptor for ligands (trioxilins A3 and B3) from the hepoxilin pathway. The polypeptide is Magnesium transporter NIPA4 (Nipal4) (Mus musculus (Mouse)).